Here is a 412-residue protein sequence, read N- to C-terminus: [Pyruvate dehydrogenase (acetyl-transferring)] kinase isozyme 4, mitochondrial (412 aa).

Positions 138–368 constitute a Histidine kinase domain; the sequence is IIEYKDSCTV…DAIIYLKALS (231 aa). ATP contacts are provided by residues 254 to 261, Asp-293, 312 to 313, and 329 to 334; these read ELFKNAMR, ST, and GFGYGL.

It belongs to the PDK/BCKDK protein kinase family. As to quaternary structure, homodimer. Interacts with the pyruvate dehydrogenase complex subunit DLAT, and is part of the multimeric pyruvate dehydrogenase complex that contains multiple copies of pyruvate dehydrogenase (E1), dihydrolipoamide acetyltransferase (DLAT, E2) and lipoamide dehydrogenase (DLD, E3). Detected in heart, white adipose tissue and muscle.

It localises to the mitochondrion matrix. The catalysed reaction is L-seryl-[pyruvate dehydrogenase E1 alpha subunit] + ATP = O-phospho-L-seryl-[pyruvate dehydrogenase E1 alpha subunit] + ADP + H(+). Kinase that plays a key role in regulation of glucose and fatty acid metabolism and homeostasis via phosphorylation of the pyruvate dehydrogenase subunits PDHA1 and PDHA2. This inhibits pyruvate dehydrogenase activity, and thereby regulates metabolite flux through the tricarboxylic acid cycle, down-regulates aerobic respiration and inhibits the formation of acetyl-coenzyme A from pyruvate. Inhibition of pyruvate dehydrogenase decreases glucose utilization and increases fat metabolism in response to prolonged fasting and starvation. Plays an important role in maintaining normal blood glucose levels under starvation, and is involved in the insulin signaling cascade. Via its regulation of pyruvate dehydrogenase activity, plays an important role in maintaining normal blood pH and in preventing the accumulation of ketone bodies under starvation. In the fed state, mediates cellular responses to glucose levels and to a high-fat diet. Regulates both fatty acid oxidation and de novo fatty acid biosynthesis. Plays a role in the generation of reactive oxygen species. Protects detached epithelial cells against anoikis. Plays a role in cell proliferation via its role in regulating carbohydrate and fatty acid metabolism. This Rhinolophus ferrumequinum (Greater horseshoe bat) protein is [Pyruvate dehydrogenase (acetyl-transferring)] kinase isozyme 4, mitochondrial (PDK4).